Consider the following 169-residue polypeptide: Steroid receptor-associated and regulated protein (169 aa).

As to quaternary structure, interacts with 14-3-3 proteins. In terms of tissue distribution, expressed in breast tumors with a higher expression level in estrogen receptor-positive cancers.

May regulate the transcriptional function of androgen and estrogen receptors. The sequence is that of Steroid receptor-associated and regulated protein from Homo sapiens (Human).